The chain runs to 473 residues: Flavonol 3-O-glucosyltransferase UGT89B1 (473 aa).

Catalysis depends on histidine 25, which acts as the Proton acceptor. Residue histidine 25 coordinates an anthocyanidin. Residue aspartate 127 is the Charge relay of the active site. UDP-alpha-D-glucose contacts are provided by alanine 348, glutamine 350, histidine 365, tryptophan 368, asparagine 369, serine 370, and glutamate 373. Residue alanine 388 coordinates an anthocyanidin. UDP-alpha-D-glucose is bound by residues aspartate 389 and glutamine 390.

It belongs to the UDP-glycosyltransferase family.

It catalyses the reaction a flavonol + UDP-alpha-D-glucose = a flavonol 3-O-beta-D-glucoside + UDP + H(+). The enzyme catalyses a 7-O-hydroxy-flavonol + UDP-alpha-D-glucose = a flavonol 7-O-beta-D-glucoside + UDP + H(+). Possesses quercetin 3-O-glucosyltransferase, 7-O-glucosyltransferase and 4'-O-glucosyltransferase activities in vitro. Also active in vitro on benzoates and benzoate derivatives. This Arabidopsis thaliana (Mouse-ear cress) protein is Flavonol 3-O-glucosyltransferase UGT89B1.